An 883-amino-acid chain; its full sequence is Ankyrin repeat and SAM domain-containing protein 6 (883 aa).

ANK repeat units follow at residues 8-37 (PGLQ…DPVA), 68-97 (AGNS…SVNS), 101-130 (YGWS…DVNA), 134-163 (LGAS…IVDH), 181-210 (LGIT…DPNH), 215-244 (VGWS…NPDH), 282-312 (KRRP…HVNL), 316-345 (DGAT…DMDK), 350-379 (HGWT…DVAL), and 383-414 (NGYT…QVNK). A disordered region spans residues 30–50 (EPGADPVAGPEAGAEPAGPEA). Disordered regions lie at residues 414–439 (KDRG…IPVL), 490–522 (MRAP…RREK), 566–773 (SHTC…ITDE), and 852–883 (SFES…SSRR). Basic and acidic residues predominate over residues 566 to 576 (SHTCHNGKADP). Positions 607–630 (PSISRSPASPASSGSFNHSPHSSG) are enriched in low complexity. A compositionally biased stretch (gly residues) spans 631-640 (GASGIGGMSR). S649 carries the post-translational modification Phosphoserine. Positions 649–661 (SGGSVDSVLSQIA) are enriched in polar residues. 2 stretches are compositionally biased toward low complexity: residues 687–711 (SSSP…PSSS) and 720–737 (PPSG…TLTP). Residues S732 and S740 each carry the phosphoserine modification. The span at 748–768 (SSVSSSSSHRQSKSSGGSSSG) shows a compositional bias: low complexity. The SAM domain maps to 771–834 (TDEDELTGIL…LAAISELNAG (64 aa)). Positions 852–862 (SFESSASNTRA) are enriched in polar residues. Residues 874–883 (RPEETVSSRR) are compositionally biased toward basic and acidic residues.

In terms of assembly, homooligomer. Interacts with NEK8. Central component of a complex containing at least ANKS6, INVS, NEK8 and NPHP3. ANKS6 may organize complex assembly by linking INVS and NPHP3 to NEK8 and INVS may target the complex to the proximal ciliary axoneme. Interacts (via SAM domain) with BICC1 (via KH domains) in an RNA-dependent manner. Interacts (via SAM domain) with ANKS3 (via SAM domain). In terms of processing, hydroxylated at Asn-129, most probably by HIF1AN. This hydroxylation results in decreased NEK8-binding. As to expression, expressed in kidney (at protein level).

The protein localises to the cell projection. The protein resides in the cilium. Its subcellular location is the cytoplasm. Functionally, required for renal function. The polypeptide is Ankyrin repeat and SAM domain-containing protein 6 (Anks6) (Mus musculus (Mouse)).